Consider the following 129-residue polypeptide: Glycine cleavage system H protein (129 aa).

One can recognise a Lipoyl-binding domain in the interval 24–106; that stretch reads TYTVGITEHA…YTDGWIFKIR (83 aa). K65 carries the N6-lipoyllysine modification.

The protein belongs to the GcvH family. As to quaternary structure, the glycine cleavage system is composed of four proteins: P, T, L and H. (R)-lipoate serves as cofactor.

Its function is as follows. The glycine cleavage system catalyzes the degradation of glycine. The H protein shuttles the methylamine group of glycine from the P protein to the T protein. The chain is Glycine cleavage system H protein from Enterobacter sp. (strain 638).